The sequence spans 337 residues: MSQVNIGINGFGRIGRIVFRNSVVHNTANVVAINDPFIDLEYMVYMLKYDSTHGVFNGDISTKDGKLIVNGKSIAVFAEKDPSNIPWGQAGAHYVVESTGVFTTIDKASAHIKGGAKKVVISAPSADAPMYVCGVNLDAYDPKAQVVSNASCTTNCLAPLAKVIHDKFGIVEGLMTTVHATTATQKTVDGPSAKDWRGGRAAAANIIPSSTGAAKAVGKVIPSLNGKLTGMAFRVPTTNVSVVDLTARLEKGASYDEIKAEVKRASENELKGILGYTEDAVVSQDFIGNSHSSIFDAAAGISLNNNFVKLVSWYDNEWGYSNRCLDLLVFMAQKDSA.

NAD(+)-binding positions include 13–14, Asp-35, and Lys-80; that span reads RI. D-glyceraldehyde 3-phosphate is bound by residues 151 to 153, Thr-182, 211 to 212, and Arg-234; these read SCT and TG. Cys-152 functions as the Nucleophile in the catalytic mechanism. Residue Asn-316 coordinates NAD(+).

It belongs to the glyceraldehyde-3-phosphate dehydrogenase family. As to quaternary structure, homotetramer.

Its subcellular location is the cytoplasm. It carries out the reaction D-glyceraldehyde 3-phosphate + phosphate + NAD(+) = (2R)-3-phospho-glyceroyl phosphate + NADH + H(+). It participates in carbohydrate degradation; glycolysis; pyruvate from D-glyceraldehyde 3-phosphate: step 1/5. The polypeptide is Glyceraldehyde-3-phosphate dehydrogenase (GAPD) (Mycosarcoma maydis (Corn smut fungus)).